A 537-amino-acid chain; its full sequence is Senescence-associated carboxylesterase 101 (537 aa).

Residues 1 to 27 (MESSSSLKGSALGKLVVTSGLLHSSWS) form the signal peptide. A helical transmembrane segment spans residues 140–160 (VIITGAALGGSVASLYTLWLL).

As to quaternary structure, part of a nuclear complex made of EDS1, PAD4 and SAG101, that can be redirected to the cytoplasm in the presence of an extranuclear form of EDS1. Interacts directly with EDS1. As to expression, expressed in senescing leaves.

It localises to the membrane. Its subcellular location is the nucleus. It is found in the cytoplasm. It carries out the reaction a carboxylic ester + H2O = an alcohol + a carboxylate + H(+). In terms of biological role, acyl hydrolase that triggers the leaf senescence onset. Can use triolein as substrate to produce oleic acids. Its function is as follows. Involved in the EDS1-dependent intrinsic and indispensable resistance signaling pathway; together with PAD4, required for programmed cell death triggered by RPS4 in response to avirulent pathogens (e.g. P.syringae pv. tomato strain DC3000 and H.parasitica isolates CALA2 and EMWA1) and in restricting the growth of virulent pathogens (e.g. H.parasitica isolates NOCO2 and P.syringae pv. tomato strain DC3000 avrRps4). Contributes in reinforcing the immune response around hypersensitive response foci. Regulates the nuclear localization of EDS1. Essential for the RPP8/HRT-mediated resistance to the turnip crinkle virus (TCV). Involved in the post-invasion resistance to P.pachyrhizi in the mesophyll. This is Senescence-associated carboxylesterase 101 (SAG101) from Arabidopsis thaliana (Mouse-ear cress).